The sequence spans 396 residues: Phosphoglycerate kinase (396 aa).

Residues 21-23 (DFN), Arg-36, 59-62 (HFDR), Arg-118, and Arg-151 each bind substrate. ATP contacts are provided by residues Lys-201, Glu-323, and 353 to 356 (GGDT).

The protein belongs to the phosphoglycerate kinase family. Monomer.

The protein resides in the cytoplasm. It carries out the reaction (2R)-3-phosphoglycerate + ATP = (2R)-3-phospho-glyceroyl phosphate + ADP. It participates in carbohydrate degradation; glycolysis; pyruvate from D-glyceraldehyde 3-phosphate: step 2/5. This Caulobacter sp. (strain K31) protein is Phosphoglycerate kinase.